The following is a 594-amino-acid chain: Dictomallein-4 (594 aa).

Positions 1–18 are cleaved as a signal peptide; sequence MKLVLIFLIINFLLIINC. The Peptidase M66 domain occupies 147 to 408; the sequence is PDVSQDYTLK…QNYFKNSIYY (262 aa). A Zn(2+)-binding site is contributed by His-300. Glu-301 is an active-site residue. Zn(2+)-binding residues include His-304 and His-310.

The protein belongs to the dictomallein family. It depends on Zn(2+) as a cofactor.

The protein localises to the secreted. This Dictyostelium discoideum (Social amoeba) protein is Dictomallein-4 (dtmlD).